The chain runs to 1369 residues: Phospholipase D1 (1369 aa).

Disordered stretches follow at residues 27 to 90 (YSEK…SSWH) and 318 to 340 (ESHS…GRKK). Residues 31 to 53 (GTGRKDAEDHTPSKITDLEKNVD) are compositionally biased toward basic and acidic residues. One can recognise a PX domain in the interval 208–379 (TDLIKVSVLD…NVLYSFLEFS (172 aa)). PLD phosphodiesterase domains lie at 641–668 (LFWA…CFGR) and 941–968 (EMIY…NERS). Basic and acidic residues predominate over residues 1277–1289 (HETHEKSENDPKN). Residues 1277–1320 (HETHEKSENDPKNPKAGSQGSGNTSASEDSKTEKPKTRTNNGLQ) are disordered. A compositionally biased stretch (polar residues) spans 1292-1303 (AGSQGSGNTSAS).

Belongs to the phospholipase D family.

Its subcellular location is the cytoplasm. The catalysed reaction is a 1,2-diacyl-sn-glycero-3-phosphocholine + H2O = a 1,2-diacyl-sn-glycero-3-phosphate + choline + H(+). Its activity is regulated as follows. Activity is slightly stimulated by oleate. In terms of biological role, required for meiosis and spore formation. Seems to be involved in the coordinate induction of late meiotic events. This chain is Phospholipase D1 (pld1), found in Schizosaccharomyces pombe (strain 972 / ATCC 24843) (Fission yeast).